The chain runs to 270 residues: Type III pantothenate kinase (270 aa).

ATP is bound at residue 11 to 18 (DAGNSRIK). Substrate contacts are provided by residues Y96 and 103–106 (GSDR). D105 (proton acceptor) is an active-site residue. T129 lines the ATP pocket. T195 contributes to the substrate binding site.

This sequence belongs to the type III pantothenate kinase family. In terms of assembly, homodimer. NH4(+) is required as a cofactor. K(+) serves as cofactor.

It is found in the cytoplasm. It catalyses the reaction (R)-pantothenate + ATP = (R)-4'-phosphopantothenate + ADP + H(+). It functions in the pathway cofactor biosynthesis; coenzyme A biosynthesis; CoA from (R)-pantothenate: step 1/5. Functionally, catalyzes the phosphorylation of pantothenate (Pan), the first step in CoA biosynthesis. This chain is Type III pantothenate kinase, found in Paraburkholderia xenovorans (strain LB400).